Reading from the N-terminus, the 94-residue chain is Large ribosomal subunit protein bL25 (94 aa).

The protein belongs to the bacterial ribosomal protein bL25 family. Part of the 50S ribosomal subunit; part of the 5S rRNA/L5/L18/L25 subcomplex. Contacts the 5S rRNA. Binds to the 5S rRNA independently of L5 and L18.

Functionally, this is one of the proteins that binds to the 5S RNA in the ribosome where it forms part of the central protuberance. This Pectobacterium carotovorum subsp. carotovorum (strain PC1) protein is Large ribosomal subunit protein bL25.